The following is a 527-amino-acid chain: EGF domain-specific O-linked N-acetylglucosamine transferase (527 aa).

Positions 1 to 17 (MLMLFVFGVLLHEVSLS) are cleaved as a signal peptide. Residues 295–297 (DYD) carry the Required for optimal activity motif. Residue Asn354 is glycosylated (N-linked (GlcNAc...) asparagine). Residues 524-527 (HDEL) carry the Prevents secretion from ER motif.

Belongs to the glycosyltransferase 61 family.

It localises to the endoplasmic reticulum lumen. It catalyses the reaction L-seryl-[protein] + UDP-N-acetyl-alpha-D-glucosamine = 3-O-(N-acetyl-beta-D-glucosaminyl)-L-seryl-[protein] + UDP + H(+). The enzyme catalyses L-threonyl-[protein] + UDP-N-acetyl-alpha-D-glucosamine = 3-O-(N-acetyl-beta-D-glucosaminyl)-L-threonyl-[protein] + UDP + H(+). Its function is as follows. Catalyzes the transfer of a single N-acetylglucosamine from UDP-GlcNAc to a serine or threonine residue in extracellular proteins resulting in their modification with a beta-linked N-acetylglucosamine (O-GlcNAc). Specifically glycosylates the Thr residue located between the fifth and sixth conserved cysteines of folded EGF-like domains. The sequence is that of EGF domain-specific O-linked N-acetylglucosamine transferase (EOGT) from Pan troglodytes (Chimpanzee).